A 163-amino-acid chain; its full sequence is Ubiquitin-like protein 1-ribosomal protein eS31 fusion protein (163 aa).

Residues 1-70 (MVFVKTLNRT…IYVNLELLGG (70 aa)) enclose the Ubiquitin-like domain. Residue Gly-70 forms a Glycyl lysine isopeptide (Gly-Lys) (interchain with K-? in acceptor proteins) linkage. A C4-type zinc finger spans residues 115–138 (CQQPSCGGGVFMAQHANRHYCGRC).

It in the N-terminal section; belongs to the ubiquitin family. This sequence in the C-terminal section; belongs to the eukaryotic ribosomal protein eS31 family.

This chain is Ubiquitin-like protein 1-ribosomal protein eS31 fusion protein (ubl-1), found in Caenorhabditis briggsae.